Consider the following 1172-residue polypeptide: Lysylphosphatidylglycerol biosynthesis bifunctional protein LysX (1172 aa).

The disordered stretch occupies residues Met1–Arg34. Residues Met1 to Asp663 form a phosphatidylglycerol lysyltransferase region. A compositionally biased stretch (polar residues) spans Val17 to Asp31. 7 helical membrane-spanning segments follow: residues Val80 to Val100, Phe122 to Ala142, Ile146 to Ile166, Phe177 to Tyr197, Ala214 to Phe234, Ala272 to Ser292, and Val612 to Ser632. Residues Val664–His1172 form a lysine--tRNA ligase region. The segment at residues Val726–Ile804 is a DNA-binding region (OB). Mg(2+) contacts are provided by Asp1084 and Glu1091.

In the N-terminal section; belongs to the LPG synthetase family. It in the C-terminal section; belongs to the class-II aminoacyl-tRNA synthetase family. It depends on Mg(2+) as a cofactor.

The protein resides in the cell membrane. It catalyses the reaction tRNA(Lys) + L-lysine + ATP = L-lysyl-tRNA(Lys) + AMP + diphosphate. It carries out the reaction L-lysyl-tRNA(Lys) + a 1,2-diacyl-sn-glycero-3-phospho-(1'-sn-glycerol) = a 1,2-diacyl-sn-glycero-3-phospho-1'-(3'-O-L-lysyl)-sn-glycerol + tRNA(Lys). Its function is as follows. Catalyzes the production of L-lysyl-tRNA(Lys)transfer and the transfer of a lysyl group from L-lysyl-tRNA(Lys) to membrane-bound phosphatidylglycerol (PG), which produces lysylphosphatidylglycerol (LPG), one of the components of the bacterial membrane with a positive net charge. LPG synthesis contributes to the resistance to cationic antimicrobial peptides (CAMPs) and likely protects M.tuberculosis against the CAMPs produced by competiting microorganisms (bacteriocins). In fact, the modification of anionic phosphatidylglycerol with positively charged L-lysine results in repulsion of the peptides. This chain is Lysylphosphatidylglycerol biosynthesis bifunctional protein LysX (lysX), found in Mycobacterium bovis (strain BCG / Pasteur 1173P2).